We begin with the raw amino-acid sequence, 109 residues long: Prefoldin subunit 1 (109 aa).

An N-acetylserine modification is found at S2.

It belongs to the prefoldin subunit beta family. As to quaternary structure, heterohexamer of two PFD-alpha type and four PFD-beta type subunits.

It is found in the cytoplasm. Its function is as follows. Binds specifically to cytosolic chaperonin (c-CPN) and transfers target proteins to it. Binds to nascent polypeptide chain and promotes folding in an environment in which there are many competing pathways for nonnative proteins. This Saccharomyces cerevisiae (strain ATCC 204508 / S288c) (Baker's yeast) protein is Prefoldin subunit 1 (PFD1).